A 254-amino-acid chain; its full sequence is Ribonuclease HII (254 aa).

Residues 67–254 (IVIAGVDEVG…HRMSFLKNII (188 aa)) form the RNase H type-2 domain. Residues Asp73, Glu74, and Asp170 each contribute to the a divalent metal cation site.

The protein belongs to the RNase HII family. The cofactor is Mn(2+). Requires Mg(2+) as cofactor.

Its subcellular location is the cytoplasm. It carries out the reaction Endonucleolytic cleavage to 5'-phosphomonoester.. Functionally, endonuclease that specifically degrades the RNA of RNA-DNA hybrids. This is Ribonuclease HII from Clostridium acetobutylicum (strain ATCC 824 / DSM 792 / JCM 1419 / IAM 19013 / LMG 5710 / NBRC 13948 / NRRL B-527 / VKM B-1787 / 2291 / W).